Consider the following 397-residue polypeptide: 3-ketoacyl-CoA thiolase, mitochondrial (397 aa).

Residues M1–P16 constitute a mitochondrion; not cleaved transit peptide. Position 25 is an N6-acetyllysine; alternate (K25). Position 25 is an N6-succinyllysine; alternate (K25). K45 carries the post-translational modification N6-succinyllysine. Residue C92 is the Acyl-thioester intermediate of the active site. The residue at position 119 (T119) is a Phosphothreonine. The residue at position 121 (S121) is a Phosphoserine. Phosphotyrosine is present on Y127. At T136 the chain carries Phosphothreonine. K137 carries the post-translational modification N6-acetyllysine; alternate. K137 is subject to N6-succinyllysine; alternate. S140 bears the Phosphoserine mark. N6-acetyllysine; alternate is present on residues K143, K171, K191, and K209. 4 positions are modified to N6-succinyllysine; alternate: K143, K171, K191, and K209. K211, K212, and K214 each carry N6-succinyllysine. Residues R224 and T227 each coordinate CoA. An N6-acetyllysine; alternate modification is found at K234. Residue K234 is modified to N6-succinyllysine; alternate. K240 carries the post-translational modification N6-succinyllysine. At K241 the chain carries N6-acetyllysine. S251 contacts CoA. Residues K269 and K270 each carry the N6-acetyllysine modification. The residue at position 305 (K305) is an N6-acetyllysine; alternate. K305 is subject to N6-succinyllysine; alternate. Residue S310 is modified to Phosphoserine. At K312 the chain carries N6-acetyllysine; alternate. N6-succinyllysine; alternate is present on K312. S333 bears the Phosphoserine mark. Residues K340 and K375 each carry the N6-acetyllysine modification. Catalysis depends on C382, which acts as the Proton donor/acceptor.

Belongs to the thiolase-like superfamily. Thiolase family. As to quaternary structure, homotetramer. Interacts with BNIP3.

It is found in the mitochondrion. It carries out the reaction an acyl-CoA + acetyl-CoA = a 3-oxoacyl-CoA + CoA. The enzyme catalyses 2 acetyl-CoA = acetoacetyl-CoA + CoA. It catalyses the reaction acetyl-CoA + H2O = acetate + CoA + H(+). The catalysed reaction is propanoyl-CoA + H2O = propanoate + CoA + H(+). It carries out the reaction butanoyl-CoA + H2O = butanoate + CoA + H(+). The enzyme catalyses hexanoyl-CoA + H2O = hexanoate + CoA + H(+). It catalyses the reaction octanoyl-CoA + H2O = octanoate + CoA + H(+). The catalysed reaction is decanoyl-CoA + H2O = decanoate + CoA + H(+). It carries out the reaction dodecanoyl-CoA + H2O = dodecanoate + CoA + H(+). The enzyme catalyses tetradecanoyl-CoA + H2O = tetradecanoate + CoA + H(+). It catalyses the reaction hexadecanoyl-CoA + H2O = hexadecanoate + CoA + H(+). Its pathway is lipid metabolism; fatty acid beta-oxidation. In the production of energy from fats, this is one of the enzymes that catalyzes the last step of the mitochondrial beta-oxidation pathway, an aerobic process breaking down fatty acids into acetyl-CoA. Using free coenzyme A/CoA, catalyzes the thiolytic cleavage of medium- to long-chain unbranched 3-oxoacyl-CoAs into acetyl-CoA and a fatty acyl-CoA shortened by two carbon atoms. Also catalyzes the condensation of two acetyl-CoA molecules into acetoacetyl-CoA and could be involved in the production of ketone bodies. Also displays hydrolase activity on various fatty acyl-CoAs. Thereby, could be responsible for the production of acetate in a side reaction to beta-oxidation. Abolishes BNIP3-mediated apoptosis and mitochondrial damage. In Homo sapiens (Human), this protein is 3-ketoacyl-CoA thiolase, mitochondrial (ACAA2).